A 531-amino-acid chain; its full sequence is Acetate CoA-transferase YdiF (531 aa).

The 5-glutamyl coenzyme A thioester intermediate role is filled by glutamate 333.

Belongs to the 3-oxoacid CoA-transferase family. Homotetramer; dimer of dimers.

It carries out the reaction an acyl-CoA + acetate = a carboxylate + acetyl-CoA. CoA transferase having broad substrate specificity for short-chain acyl-CoA thioesters with the activity decreasing when the length of the carboxylic acid chain exceeds four carbons. May play a role in short-chain fatty acid metabolism in E.coli. This is Acetate CoA-transferase YdiF (ydiF) from Escherichia coli (strain K12).